The chain runs to 619 residues: Phosphomethylpyrimidine synthase (619 aa).

Over residues 1 to 11 (MHEQRSLTMNA) the composition is skewed to polar residues. The interval 1–25 (MHEQRSLTMNALTPAVSTGPLPASR) is disordered. Substrate is bound by residues Asn220, Met249, Tyr278, His314, 334-336 (SRG), 375-378 (DGLR), and Glu414. His418 lines the Zn(2+) pocket. Position 441 (Tyr441) interacts with substrate. His482 is a Zn(2+) binding site. 3 residues coordinate [4Fe-4S] cluster: Cys562, Cys565, and Cys570.

This sequence belongs to the ThiC family. In terms of assembly, homodimer. Requires [4Fe-4S] cluster as cofactor.

It catalyses the reaction 5-amino-1-(5-phospho-beta-D-ribosyl)imidazole + S-adenosyl-L-methionine = 4-amino-2-methyl-5-(phosphooxymethyl)pyrimidine + CO + 5'-deoxyadenosine + formate + L-methionine + 3 H(+). It functions in the pathway cofactor biosynthesis; thiamine diphosphate biosynthesis. In terms of biological role, catalyzes the synthesis of the hydroxymethylpyrimidine phosphate (HMP-P) moiety of thiamine from aminoimidazole ribotide (AIR) in a radical S-adenosyl-L-methionine (SAM)-dependent reaction. The protein is Phosphomethylpyrimidine synthase of Mesorhizobium japonicum (strain LMG 29417 / CECT 9101 / MAFF 303099) (Mesorhizobium loti (strain MAFF 303099)).